We begin with the raw amino-acid sequence, 358 residues long: Sesquiterpene synthase Agr3 (358 aa).

Mg(2+) contacts are provided by Asp-99, Asn-246, Ser-250, and Glu-254. The DDXXD motif signature appears at 99 to 103 (DNISD). 2 residues coordinate (2E,6E)-farnesyl diphosphate: Arg-334 and Tyr-335.

The protein belongs to the terpene synthase family. It depends on Mg(2+) as a cofactor.

It catalyses the reaction (2E,6E)-farnesyl diphosphate = alpha-muurolene + diphosphate. The catalysed reaction is (2E,6E)-farnesyl diphosphate = gamma-muurolene + diphosphate. The enzyme catalyses (2E,6E)-farnesyl diphosphate = delta-cadinene + diphosphate. Terpene cyclase that catalyzes the cyclization of farnesyl diphosphate (FPP) to various sesquiterpenes, including alpha-muurolene, gamma-muurolene, germacrene, delta-cadinene, delta-cadinol and cubenol. This Cyclocybe aegerita (Black poplar mushroom) protein is Sesquiterpene synthase Agr3.